The chain runs to 676 residues: A-type ATP synthase subunit I (676 aa).

8 consecutive transmembrane segments (helical) span residues 341–361 (VFIA…IGYG), 390–410 (AGVM…PFIV), 449–469 (ILLF…FALG), 490–510 (IIGV…VGVF), 538–558 (LNVY…LFVM), 564–584 (MGAM…QIMS), 590–610 (AIGL…MKLI), and 617–637 (IPIV…ILGI).

Belongs to the V-ATPase 116 kDa subunit family. Has multiple subunits with at least A(3), B(3), C, D, E, F, H, I and proteolipid K(x).

It localises to the cell membrane. Its function is as follows. Component of the A-type ATP synthase that produces ATP from ADP in the presence of a proton gradient across the membrane. This is A-type ATP synthase subunit I from Archaeoglobus fulgidus (strain ATCC 49558 / DSM 4304 / JCM 9628 / NBRC 100126 / VC-16).